The sequence spans 332 residues: MTIKIGINGFGRIGRVLFRLAQERENIEVVAINDLLDPKYIAYMLKYDSTHGNFKKDIEVKNNNLIINGKKIRITSIKDPEKLMWDKLLIDVVIESTGLFLTKDTAYKHILSGAKKVVITGPSKDDIPMFVRGANFDKYKGEKIVSNASCTTNCLAPLSKVIDDHFGIIEGLMTTVHASTATQKIVDSASKKDWRGGRGALQNIIPSSTGAAVAVGKVLPNLNGKLTGIAFRVPTANVSVVDLTVRYKKTATYNEICEVVKNASEQKMKGILGYTEDEVVSTDFNGKELTSIFDAKAGLSLNKNFAKLISWYDNETGYSSKVLDLVELVALK.

Residues arginine 12–isoleucine 13, aspartate 34, lysine 78, and threonine 120 contribute to the NAD(+) site. D-glyceraldehyde 3-phosphate-binding positions include serine 149–threonine 151, threonine 180, threonine 209–glycine 210, and arginine 232. Cysteine 150 (nucleophile) is an active-site residue. Residue asparagine 314 coordinates NAD(+).

The protein belongs to the glyceraldehyde-3-phosphate dehydrogenase family. Homotetramer.

It localises to the cytoplasm. It catalyses the reaction D-glyceraldehyde 3-phosphate + phosphate + NAD(+) = (2R)-3-phospho-glyceroyl phosphate + NADH + H(+). Its pathway is carbohydrate degradation; glycolysis; pyruvate from D-glyceraldehyde 3-phosphate: step 1/5. Functionally, catalyzes the oxidative phosphorylation of glyceraldehyde 3-phosphate (G3P) to 1,3-bisphosphoglycerate (BPG) using the cofactor NAD. The first reaction step involves the formation of a hemiacetal intermediate between G3P and a cysteine residue, and this hemiacetal intermediate is then oxidized to a thioester, with concomitant reduction of NAD to NADH. The reduced NADH is then exchanged with the second NAD, and the thioester is attacked by a nucleophilic inorganic phosphate to produce BPG. In Buchnera aphidicola subsp. Schizaphis graminum (strain Sg), this protein is Glyceraldehyde-3-phosphate dehydrogenase (gapA).